The chain runs to 293 residues: NAD kinase (293 aa).

Asp68 serves as the catalytic Proton acceptor. NAD(+) contacts are provided by residues 68 to 69 (DG), 142 to 143 (ND), Arg153, Asp172, and 183 to 188 (TAYSLS).

This sequence belongs to the NAD kinase family. The cofactor is a divalent metal cation.

Its subcellular location is the cytoplasm. The catalysed reaction is NAD(+) + ATP = ADP + NADP(+) + H(+). Its function is as follows. Involved in the regulation of the intracellular balance of NAD and NADP, and is a key enzyme in the biosynthesis of NADP. Catalyzes specifically the phosphorylation on 2'-hydroxyl of the adenosine moiety of NAD to yield NADP. The polypeptide is NAD kinase (Lachnospira eligens (strain ATCC 27750 / DSM 3376 / VPI C15-48 / C15-B4) (Eubacterium eligens)).